Here is a 221-residue protein sequence, read N- to C-terminus: Large ribosomal subunit protein uL3 (221 aa).

Positions 123–156 (GFAGSIKRHNQSRGPESHGSRYHRRPGSMGPIKG) are disordered.

This sequence belongs to the universal ribosomal protein uL3 family. In terms of assembly, part of the 50S ribosomal subunit. Forms a cluster with proteins L14 and L19.

In terms of biological role, one of the primary rRNA binding proteins, it binds directly near the 3'-end of the 23S rRNA, where it nucleates assembly of the 50S subunit. The chain is Large ribosomal subunit protein uL3 from Aster yellows witches'-broom phytoplasma (strain AYWB).